The sequence spans 190 residues: Elongation factor P-like protein (190 aa).

The protein belongs to the elongation factor P family.

This chain is Elongation factor P-like protein, found in Yersinia pestis bv. Antiqua (strain Antiqua).